A 505-amino-acid chain; its full sequence is Lysine--tRNA ligase (505 aa).

Residues glutamate 415 and glutamate 422 each contribute to the Mg(2+) site.

Belongs to the class-II aminoacyl-tRNA synthetase family. As to quaternary structure, homodimer. Mg(2+) is required as a cofactor.

It is found in the cytoplasm. It catalyses the reaction tRNA(Lys) + L-lysine + ATP = L-lysyl-tRNA(Lys) + AMP + diphosphate. The chain is Lysine--tRNA ligase from Xanthomonas campestris pv. campestris (strain 8004).